A 242-amino-acid chain; its full sequence is uncharacterized protein (242 aa).

The S-adenosyl-L-methionine site is built by G198, I218, and L227.

It belongs to the class IV-like SAM-binding methyltransferase superfamily. RNA methyltransferase TrmH family.

This is an uncharacterized protein from Mycoplasma genitalium (strain ATCC 33530 / DSM 19775 / NCTC 10195 / G37) (Mycoplasmoides genitalium).